We begin with the raw amino-acid sequence, 553 residues long: Phosphoglucomutase (553 aa).

The segment at 1–24 (MQATVKRYPTTPISGQTMGTSGLR) is disordered. Residues 11-20 (TPISGQTMGT) are compositionally biased toward polar residues. Residues Thr20, Arg24, 117 to 118 (SH), and Lys131 contribute to the substrate site. Ser117 serves as the catalytic Phosphoserine intermediate. Position 117 (Ser117) interacts with Mg(2+). Positions 289, 291, and 293 each coordinate Mg(2+). Residues 293-294 (DR), Thr352, 371-373 (EES), Lys384, and Arg509 each bind substrate.

This sequence belongs to the phosphohexose mutase family. Requires Mg(2+) as cofactor.

The protein localises to the cytoplasm. It carries out the reaction alpha-D-glucose 1-phosphate = alpha-D-glucose 6-phosphate. In terms of biological role, this enzyme participates in both the breakdown and synthesis of glucose. In Entamoeba dispar, this protein is Phosphoglucomutase (pgm).